The sequence spans 154 residues: Interleukin-2 (154 aa).

The N-terminal stretch at 1–20 is a signal peptide; that stretch reads MYRMQLLSCIALSLALVTNS. Thr23 carries an O-linked (GalNAc...) threonine glycan. A disulfide bridge connects residues Cys78 and Cys126.

This sequence belongs to the IL-2 family.

The protein resides in the secreted. Functionally, cytokine produced by activated CD4-positive helper T-cells and to a lesser extend activated CD8-positive T-cells and natural killer (NK) cells that plays pivotal roles in the immune response and tolerance. Binds to a receptor complex composed of either the high-affinity trimeric IL-2R (IL2RA/CD25, IL2RB/CD122 and IL2RG/CD132) or the low-affinity dimeric IL-2R (IL2RB and IL2RG). Interaction with the receptor leads to oligomerization and conformation changes in the IL-2R subunits resulting in downstream signaling starting with phosphorylation of JAK1 and JAK3. In turn, JAK1 and JAK3 phosphorylate the receptor to form a docking site leading to the phosphorylation of several substrates including STAT5. This process leads to activation of several pathways including STAT, phosphoinositide-3-kinase/PI3K and mitogen-activated protein kinase/MAPK pathways. Functions as a T-cell growth factor and can increase NK-cell cytolytic activity as well. Promotes strong proliferation of activated B-cells and subsequently immunoglobulin production. Plays a pivotal role in regulating the adaptive immune system by controlling the survival and proliferation of regulatory T-cells, which are required for the maintenance of immune tolerance. Moreover, participates in the differentiation and homeostasis of effector T-cell subsets, including Th1, Th2, Th17 as well as memory CD8-positive T-cells. The protein is Interleukin-2 (IL2) of Papio anubis (Olive baboon).